The primary structure comprises 428 residues: Flotillin-2 (428 aa).

G2 is lipidated: N-myristoyl glycine. C4 is lipidated: S-palmitoyl cysteine; by ZDHHC5. C19 carries S-palmitoyl cysteine lipidation. C20 is lipidated: S-palmitoyl cysteine; by ZDHHC5. S405 carries the phosphoserine modification.

This sequence belongs to the band 7/mec-2 family. Flotillin subfamily. Heterooligomeric complex of flotillin-1 and flotillin-2 and caveolin-1 and caveolin-2. Interacts with ECPAS. Post-translationally, ZDHHC5-catalyzed palmitoylation predominantly occurs at Cys-4. ZDHHC5-catalyzed palmitoylation may be required for the formation of higher-order complexes and for neurite outgrowth in cultured neural stem cells. In terms of tissue distribution, in skin, expressed in epidermis and epidermal appendages but not in dermis. Expressed in all layers of the epidermis except the basal layer. In hair follicles, expressed in the suprabasal layer but not the basal layer. Also expressed in melanoma and carcinoma cell lines, fibroblasts and foreskin melanocytes.

It is found in the cell membrane. The protein localises to the membrane. Its subcellular location is the caveola. It localises to the endosome. In terms of biological role, may act as a scaffolding protein within caveolar membranes, functionally participating in formation of caveolae or caveolae-like vesicles. May be involved in epidermal cell adhesion and epidermal structure and function. The protein is Flotillin-2 (FLOT2) of Homo sapiens (Human).